We begin with the raw amino-acid sequence, 439 residues long: SH3 domain-containing protein 1 (439 aa).

Positions 32-263 (DAVVVDEEEL…MIAEEEAIGS (232 aa)) constitute a BAR domain. The span at 277–291 (SLPQQEPNSNSSGEI) shows a compositional bias: polar residues. A disordered region spans residues 277-362 (SLPQQEPNSN…SDDHHNHQLL (86 aa)). Basic and acidic residues predominate over residues 318–358 (SPKDEMKSSPQEETKSNHQKEIKSSPQEEIKKSNGSDDHHN). Residues 366–425 (DSYFLAKVVHPFDAQAPGELSLAVDDYVIVRQVAGTGWSEGEYKGKAGWFPSAYVEKQEK) form the SH3 domain.

Interacts with the auxilin-like protein AUXI1. In terms of tissue distribution, highly expressed in flowers. Detected in seedlings, roots, leaves and stems.

It is found in the cytoplasmic vesicle. Its subcellular location is the clathrin-coated vesicle. The protein localises to the cell membrane. The protein resides in the golgi apparatus. It localises to the trans-Golgi network. It is found in the endoplasmic reticulum. Its function is as follows. Lipid binding protein bound strongly to phosphatidic acid, phosphatidylinositol-4-phosphate and phosphatidylinositol-4,5-bisphosphate. Binds actin in vitro. Involved in trafficking and modification of clathrin-coated vesicles. The protein is SH3 domain-containing protein 1 (SH3P1) of Arabidopsis thaliana (Mouse-ear cress).